A 132-amino-acid polypeptide reads, in one-letter code: Small ribosomal subunit protein uS8 (132 aa).

It belongs to the universal ribosomal protein uS8 family. In terms of assembly, part of the 30S ribosomal subunit. Contacts proteins S5 and S12.

Functionally, one of the primary rRNA binding proteins, it binds directly to 16S rRNA central domain where it helps coordinate assembly of the platform of the 30S subunit. This is Small ribosomal subunit protein uS8 from Beijerinckia indica subsp. indica (strain ATCC 9039 / DSM 1715 / NCIMB 8712).